A 513-amino-acid chain; its full sequence is Probable helicase MJ1565 (513 aa).

ATP contacts are provided by residues R151, 160-165 (GMGKSN), and 467-468 (KV).

Belongs to the HerA family.

It carries out the reaction Couples ATP hydrolysis with the unwinding of duplex DNA at the replication fork by translocating in the 5'-3' direction. This creates two antiparallel DNA single strands (ssDNA). The leading ssDNA polymer is the template for DNA polymerase III holoenzyme which synthesizes a continuous strand.. The catalysed reaction is ATP + H2O = ADP + phosphate + H(+). The enzyme catalyses Couples ATP hydrolysis with the unwinding of duplex DNA by translocating in the 3'-5' direction.. In terms of biological role, a probably bidirectional DNA helicase. This is Probable helicase MJ1565 from Methanocaldococcus jannaschii (strain ATCC 43067 / DSM 2661 / JAL-1 / JCM 10045 / NBRC 100440) (Methanococcus jannaschii).